We begin with the raw amino-acid sequence, 158 residues long: Phosphopantetheine adenylyltransferase (158 aa).

It belongs to the eukaryotic CoaD family.

Its subcellular location is the cytoplasm. It carries out the reaction (R)-4'-phosphopantetheine + ATP + H(+) = 3'-dephospho-CoA + diphosphate. Its pathway is cofactor biosynthesis; coenzyme A biosynthesis. In terms of biological role, reversibly transfers an adenylyl group from ATP to 4'-phosphopantetheine, yielding dephospho-CoA (dPCoA) and pyrophosphate. This Pyrococcus horikoshii (strain ATCC 700860 / DSM 12428 / JCM 9974 / NBRC 100139 / OT-3) protein is Phosphopantetheine adenylyltransferase.